The chain runs to 380 residues: MKKPLGKIVASTALLISVAFSSSIASAAEEAKEKYLIGFNEQEAVSEFVEQVEANDEVAILSEEEEVEIELLHEFETIPVLSVELSPEDVDALELDPAISYIEEDAEVTTMAQSVPWGISRVQAPAAHNRGLTGSGVKVAVLDTGISTHPDLNIRGGASFVPGEPSTQDGNGHGTHVAGTIAALNNSIGVLGVAPSAELYAVKVLGASGSGSVSSIAQGLEWAGNNGMHVANLSLGSPSPSATLEQAVNSATSRGVLVVAASGNSGAGSISYPARYANAMAVGATDQNNNRASFSQYGAGLDIVAPGVNVQSTYPGSTYASLNGTSMATPHVAGAAALVKQKNPSWSNVQIRNHLKNTATSLGSTNLYGSGLVNAEAATR.

Residues methionine 1–alanine 27 form the signal peptide. Positions alanine 28 to methionine 111 are excised as a propeptide. The Inhibitor I9 domain maps to lysine 34–methionine 111. Residue glutamine 113 coordinates Ca(2+). The region spanning proline 116–threonine 379 is the Peptidase S8 domain. Catalysis depends on aspartate 143, which acts as the Charge relay system. Aspartate 151 serves as a coordination point for Ca(2+). Histidine 173 serves as the catalytic Charge relay system. Positions 184, 186, 188, 190, 274, 276, and 279 each coordinate Ca(2+). Catalysis depends on serine 326, which acts as the Charge relay system.

It belongs to the peptidase S8 family. Requires Ca(2+) as cofactor.

It is found in the secreted. The chain is Alkaline protease from Shouchella clausii (Alkalihalobacillus clausii).